The following is a 275-amino-acid chain: 2,3,4,5-tetrahydropyridine-2,6-dicarboxylate N-succinyltransferase (275 aa).

Substrate is bound by residues arginine 106 and aspartate 143.

This sequence belongs to the transferase hexapeptide repeat family. In terms of assembly, homotrimer.

It is found in the cytoplasm. It carries out the reaction (S)-2,3,4,5-tetrahydrodipicolinate + succinyl-CoA + H2O = (S)-2-succinylamino-6-oxoheptanedioate + CoA. It participates in amino-acid biosynthesis; L-lysine biosynthesis via DAP pathway; LL-2,6-diaminopimelate from (S)-tetrahydrodipicolinate (succinylase route): step 1/3. The protein is 2,3,4,5-tetrahydropyridine-2,6-dicarboxylate N-succinyltransferase of Cupriavidus necator (strain ATCC 17699 / DSM 428 / KCTC 22496 / NCIMB 10442 / H16 / Stanier 337) (Ralstonia eutropha).